Here is a 408-residue protein sequence, read N- to C-terminus: Ribulose bisphosphate carboxylase/oxygenase activase, chloroplastic (408 aa).

The transit peptide at 1 to 32 (MQVTMKSSAVSGQRVGGARVATRSVRRAQLQV) directs the protein to the chloroplast. 138-145 (GGKGQGKT) is a binding site for ATP.

It belongs to the RuBisCO activase family. In terms of assembly, monomer.

Its subcellular location is the plastid. It is found in the chloroplast stroma. Its function is as follows. Activation of RuBisCO (ribulose-1,5-bisphosphate carboxylase/oxygenase; EC 4.1.1.39) involves the ATP-dependent carboxylation of the epsilon-amino group of lysine leading to a carbamate structure. This Chlamydomonas reinhardtii (Chlamydomonas smithii) protein is Ribulose bisphosphate carboxylase/oxygenase activase, chloroplastic.